A 562-amino-acid polypeptide reads, in one-letter code: Glutamate--tRNA ligase (562 aa).

The 'HIGH' region motif lies at P104–N114.

The protein belongs to the class-I aminoacyl-tRNA synthetase family. Glutamate--tRNA ligase type 2 subfamily.

Its subcellular location is the cytoplasm. The catalysed reaction is tRNA(Glu) + L-glutamate + ATP = L-glutamyl-tRNA(Glu) + AMP + diphosphate. Its function is as follows. Catalyzes the attachment of glutamate to tRNA(Glu) in a two-step reaction: glutamate is first activated by ATP to form Glu-AMP and then transferred to the acceptor end of tRNA(Glu). In Ignicoccus hospitalis (strain KIN4/I / DSM 18386 / JCM 14125), this protein is Glutamate--tRNA ligase.